We begin with the raw amino-acid sequence, 534 residues long: Peptide chain release factor 3 (534 aa).

Residues 9–278 form the tr-type G domain; sequence ARRRTFAIIS…FFVEHAPSPQ (270 aa). Residues 18–25, 86–90, and 140–143 contribute to the GTP site; these read SHPDAGKT, DTPGH, and NKLD.

Belongs to the TRAFAC class translation factor GTPase superfamily. Classic translation factor GTPase family. PrfC subfamily.

It is found in the cytoplasm. Its function is as follows. Increases the formation of ribosomal termination complexes and stimulates activities of RF-1 and RF-2. It binds guanine nucleotides and has strong preference for UGA stop codons. It may interact directly with the ribosome. The stimulation of RF-1 and RF-2 is significantly reduced by GTP and GDP, but not by GMP. The sequence is that of Peptide chain release factor 3 from Xylella fastidiosa (strain M12).